The primary structure comprises 686 residues: tRNA wybutosine-synthesizing protein 4 (686 aa).

The span at 1-10 shows a compositional bias: basic and acidic residues; that stretch reads MGPRSRERRA. The interval 1–21 is disordered; sequence MGPRSRERRAGAVQNTNDSSA. S-adenosyl-L-methionine contacts are provided by residues Arg59, Gly89, Asp114, 161–162, and Glu188; that span reads DL.

Belongs to the methyltransferase superfamily. LCMT family. In terms of assembly, interacts with RNF144B/IBRDC2.

The enzyme catalyses 7-[(3S)-3-amino-3-carboxypropyl]wyosine(37) in tRNA(Phe) + S-adenosyl-L-methionine = 7-[(3S)-(3-amino-3-methoxycarbonyl)propyl]wyosine(37) in tRNA(Phe) + S-adenosyl-L-homocysteine. The catalysed reaction is 7-[(3S)-(3-amino-3-methoxycarbonyl)propyl]wyosine(37) in tRNA(Phe) + S-adenosyl-L-methionine + CO2 = wybutosine(37) in tRNA(Phe) + S-adenosyl-L-homocysteine + 2 H(+). The protein operates within tRNA modification; wybutosine-tRNA(Phe) biosynthesis. In terms of biological role, probable S-adenosyl-L-methionine-dependent methyltransferase that acts as a component of the wybutosine biosynthesis pathway. Wybutosine is a hyper modified guanosine with a tricyclic base found at the 3'-position adjacent to the anticodon of eukaryotic phenylalanine tRNA. May methylate the carboxyl group of leucine residues to form alpha-leucine ester residues. This is tRNA wybutosine-synthesizing protein 4 (LCMT2) from Homo sapiens (Human).